The chain runs to 269 residues: Pertussis toxin subunit 1 (269 aa).

Positions 1 to 34 (MRCTRAIRQTARTGWLTWLAILAVTAPVTSPAWA) are cleaved as a signal peptide. Trp-60 lines the NAD(+) pocket. Active-site residues include His-69 and Glu-163. Cysteines 75 and 235 form a disulfide.

The protein belongs to the bacterial exotoxin subunit A family. As to quaternary structure, pertussis toxin contains five different chains, S1-S5. They are organized into 2 functional subunits: A, composed of S1 (which is toxic) and B, containing S2, S3, S5, and two copies of S4 (B binds to the membrane receptors). Dimers of S2-S4 and S3-S4 are held together by S5.

The protein resides in the secreted. S1 is an NAD-dependent ADP-ribosyltransferase, which plays a crucial role in the pathogenesis of B.pertussis causing disruption of normal host cellular regulation. It catalyzes the ADP-ribosylation of a cysteine in the alpha subunit of host heterotrimeric G proteins. In the absence of G proteins it also catalyzes the cleavage of NAD(+) into ADP-ribose and nicotinamide. It irreversibly uncouples the G-alpha GTP-binding proteins from their membrane receptors. In Bordetella pertussis (strain Tohama I / ATCC BAA-589 / NCTC 13251), this protein is Pertussis toxin subunit 1 (ptxA).